The following is a 119-amino-acid chain: Nucleoid-associated protein Cphy_0047 (119 aa).

The segment at 23–45 is disordered; sequence AQRMQKQMEDKTKEMEEKQWEAT. Residues 28–42 show a composition bias toward basic and acidic residues; sequence KQMEDKTKEMEEKQW.

Belongs to the YbaB/EbfC family. Homodimer.

The protein resides in the cytoplasm. The protein localises to the nucleoid. Binds to DNA and alters its conformation. May be involved in regulation of gene expression, nucleoid organization and DNA protection. The protein is Nucleoid-associated protein Cphy_0047 of Lachnoclostridium phytofermentans (strain ATCC 700394 / DSM 18823 / ISDg) (Clostridium phytofermentans).